Reading from the N-terminus, the 263-residue chain is Probable cyclic nucleotide phosphodiesterase CPS_4178 (263 aa).

Fe cation contacts are provided by Asp21, His23, Asp62, Asn94, His160, His198, and His200. AMP-binding positions include His23, Asp62, and 94 to 95; that span reads NH. His200 is an AMP binding site.

The protein belongs to the cyclic nucleotide phosphodiesterase class-III family. It depends on Fe(2+) as a cofactor.

This chain is Probable cyclic nucleotide phosphodiesterase CPS_4178, found in Colwellia psychrerythraea (strain 34H / ATCC BAA-681) (Vibrio psychroerythus).